Here is a 196-residue protein sequence, read N- to C-terminus: DnaA initiator-associating protein DiaA (196 aa).

The region spanning 34–196 (MVQSLLNGNK…DNTLFPHQND (163 aa)) is the SIS domain.

It belongs to the SIS family. DiaA subfamily. Homotetramer; dimer of dimers.

Required for the timely initiation of chromosomal replication via direct interactions with the DnaA initiator protein. The sequence is that of DnaA initiator-associating protein DiaA from Pectobacterium atrosepticum (strain SCRI 1043 / ATCC BAA-672) (Erwinia carotovora subsp. atroseptica).